Here is a 432-residue protein sequence, read N- to C-terminus: D-amino acid dehydrogenase (432 aa).

3-17 is an FAD binding site; sequence VVVLGSGVVGVTSAW.

The protein belongs to the DadA oxidoreductase family. It depends on FAD as a cofactor.

The catalysed reaction is a D-alpha-amino acid + A + H2O = a 2-oxocarboxylate + AH2 + NH4(+). The protein operates within amino-acid degradation; D-alanine degradation; NH(3) and pyruvate from D-alanine: step 1/1. Its function is as follows. Oxidative deamination of D-amino acids. This is D-amino acid dehydrogenase from Enterobacter sp. (strain 638).